An 862-amino-acid chain; its full sequence is Leucine--tRNA ligase (862 aa).

A 'HIGH' region motif is present at residues 51–61 (PYPSGSLHMGH). The short motif at 624-628 (KMSKS) is the 'KMSKS' region element. Lys-627 provides a ligand contact to ATP.

Belongs to the class-I aminoacyl-tRNA synthetase family.

It localises to the cytoplasm. It carries out the reaction tRNA(Leu) + L-leucine + ATP = L-leucyl-tRNA(Leu) + AMP + diphosphate. The protein is Leucine--tRNA ligase of Prochlorococcus marinus (strain NATL1A).